Reading from the N-terminus, the 146-residue chain is Core protein D2 (146 aa).

Belongs to the orthopoxvirus OPG114 family. As to quaternary structure, part of a complex composed of the kinase OPG054, OPG092, OPG100, OPG114, OPG115, OPG142 and OPG157.

The protein resides in the virion. Functionally, late protein which is part of a large complex required for early virion morphogenesis. This complex participates in the formation of virosomes and the incorporation of virosomal contents into nascent immature virions. The sequence is that of Core protein D2 (OPG114) from Vaccinia virus (strain Copenhagen) (VACV).